Consider the following 293-residue polypeptide: MSAKIIDGKTIAQQVRNEVAALVQKRLAAGKRAPGLAVVLVGENPASQIYVASKRKACEEVGFVSRSYDLPMTTTEAELLALIDSLNNDSEIDGILVQLPLPAGIDNVKVLEHIHPDKDVDGFHPYNVGRLCQRAPKLRPCTPRGIVTLLERYDIPTYGLNAVVVGASNIVGRPMSLELLLAGCTTTVTHRFTKNLRQHVENADLLVVAVGKPGFIPGEWIKPGAIVIDVGINRLESGKVVGDVEFDVAVERAGWITPVPGGVGPMTVATLIQNTLQACEEYHDINENRVKGQ.

Residues 166–168 (GAS) and Ile-232 each bind NADP(+).

Belongs to the tetrahydrofolate dehydrogenase/cyclohydrolase family. As to quaternary structure, homodimer.

It carries out the reaction (6R)-5,10-methylene-5,6,7,8-tetrahydrofolate + NADP(+) = (6R)-5,10-methenyltetrahydrofolate + NADPH. The catalysed reaction is (6R)-5,10-methenyltetrahydrofolate + H2O = (6R)-10-formyltetrahydrofolate + H(+). It functions in the pathway one-carbon metabolism; tetrahydrofolate interconversion. Its function is as follows. Catalyzes the oxidation of 5,10-methylenetetrahydrofolate to 5,10-methenyltetrahydrofolate and then the hydrolysis of 5,10-methenyltetrahydrofolate to 10-formyltetrahydrofolate. The protein is Bifunctional protein FolD of Yersinia enterocolitica serotype O:8 / biotype 1B (strain NCTC 13174 / 8081).